A 376-amino-acid chain; its full sequence is UDP-N-acetylglucosamine--N-acetylmuramyl-(pentapeptide) pyrophosphoryl-undecaprenol N-acetylglucosamine transferase (376 aa).

UDP-N-acetyl-alpha-D-glucosamine is bound by residues 11–13, Asn117, Arg160, Ser208, and Gln310; that span reads TGG.

This sequence belongs to the glycosyltransferase 28 family. MurG subfamily.

It localises to the cell inner membrane. It carries out the reaction di-trans,octa-cis-undecaprenyl diphospho-N-acetyl-alpha-D-muramoyl-L-alanyl-D-glutamyl-meso-2,6-diaminopimeloyl-D-alanyl-D-alanine + UDP-N-acetyl-alpha-D-glucosamine = di-trans,octa-cis-undecaprenyl diphospho-[N-acetyl-alpha-D-glucosaminyl-(1-&gt;4)]-N-acetyl-alpha-D-muramoyl-L-alanyl-D-glutamyl-meso-2,6-diaminopimeloyl-D-alanyl-D-alanine + UDP + H(+). It participates in cell wall biogenesis; peptidoglycan biosynthesis. Cell wall formation. Catalyzes the transfer of a GlcNAc subunit on undecaprenyl-pyrophosphoryl-MurNAc-pentapeptide (lipid intermediate I) to form undecaprenyl-pyrophosphoryl-MurNAc-(pentapeptide)GlcNAc (lipid intermediate II). This Rickettsia africae (strain ESF-5) protein is UDP-N-acetylglucosamine--N-acetylmuramyl-(pentapeptide) pyrophosphoryl-undecaprenol N-acetylglucosamine transferase.